Here is a 348-residue protein sequence, read N- to C-terminus: Oxygen-dependent coproporphyrinogen-III oxidase (348 aa).

Ser-104 lines the substrate pocket. The a divalent metal cation site is built by His-108 and His-118. The Proton donor role is filled by His-118. 120–122 (NYR) is a binding site for substrate. A divalent metal cation-binding residues include His-152 and His-182. The important for dimerization stretch occupies residues 272 to 307 (YAEFNLVWDRGTIFGLQTNGRTESILMSLPPLARWE).

Belongs to the aerobic coproporphyrinogen-III oxidase family. In terms of assembly, homodimer. The cofactor is a divalent metal cation.

The protein resides in the cytoplasm. The catalysed reaction is coproporphyrinogen III + O2 + 2 H(+) = protoporphyrinogen IX + 2 CO2 + 2 H2O. It participates in porphyrin-containing compound metabolism; protoporphyrin-IX biosynthesis; protoporphyrinogen-IX from coproporphyrinogen-III (O2 route): step 1/1. Involved in the heme and chlorophyll biosynthesis. Catalyzes the aerobic oxidative decarboxylation of propionate groups of rings A and B of coproporphyrinogen-III to yield the vinyl groups in protoporphyrinogen-IX. The sequence is that of Oxygen-dependent coproporphyrinogen-III oxidase from Prochlorococcus marinus (strain NATL1A).